A 510-amino-acid polypeptide reads, in one-letter code: E3 ubiquitin-protein ligase TRIM7 (510 aa).

An RING-type zinc finger spans residues 29–81; the sequence is CSICLEFFREPVSVECGHSFCRACIMRCWERPGAGTGTATRTLPCPLPCPQCR. Serine 106 is subject to Phosphoserine; by RPS6KA5. The B box-type zinc-finger motif lies at 124–165; the sequence is AAAARCSQHGEQLKLYCQDDGRAICVVCDRAREHRSHAVLPL. Zn(2+) contacts are provided by cysteine 129, histidine 132, cysteine 151, and histidine 157. Residues 165–275 are a coiled coil; the sequence is LEEAVQEAKE…SGQIQETAQK (111 aa). Positions 323–510 constitute a B30.2/SPRY domain; that stretch reads LLKKFKEDLQ…STGTYLRIWP (188 aa).

The protein belongs to the TRIM/RBCC family. Forms homodimers. Interacts with GNIP2. Interacts with GYG1. Interacts with RNF187 (via C-terminus). Post-translationally, phosphorylated at Ser-106 by RPS6KA5/MSK1, which stimulates the ubiquitin ligase activity. Auto-ubiquitinates via 'Lys-63'-linked polyubiquitination. As to expression, highly expressed in antigen-presenting cells.

The protein localises to the nucleus. Its subcellular location is the cytoplasm. It localises to the golgi apparatus. The enzyme catalyses S-ubiquitinyl-[E2 ubiquitin-conjugating enzyme]-L-cysteine + [acceptor protein]-L-lysine = [E2 ubiquitin-conjugating enzyme]-L-cysteine + N(6)-ubiquitinyl-[acceptor protein]-L-lysine.. It functions in the pathway protein modification; protein ubiquitination. Its function is as follows. E3 ubiquitin-protein ligase that have both tumor-promoting and tumor-suppressing activities and functions in several biological processes including innate immunity, regulation of ferroptosis as well as cell proliferation and migration. Acts as an antiviral effector against multiple viruses by targeting specific viral proteins for ubiquitination and degradation including norovirus NTPase protein. Mechanistically, recognizes the C-terminal glutamine-containing motif generated by viral proteases that process the polyproteins and trigger their ubiquitination and subsequent degradation. Mediates 'Lys-63'-linked polyubiquitination and stabilization of the JUN coactivator RNF187 in response to growth factor signaling via the MEK/ERK pathway, thereby regulating JUN transactivation and cellular proliferation. Promotes the TLR4-mediated signaling activation through its E3 ligase domain leading to production of pro-inflammatory cytokines and type I interferon. Also plays a negative role in the regulation of exogenous cytosolic DNA virus-triggered immune response. Mechanistically, enhances the 'Lys-48'-linked ubiquitination of STING1 leading to its proteasome-dependent degradation. Mediates the ubiquitination of the SIN3-HDAC chromatin remodeling complex component BRMS1. Modulates NCOA4-mediated ferritinophagy and ferroptosis in glioblastoma cells by ubiquitinating NCOA4, leading to its degradation. The protein is E3 ubiquitin-protein ligase TRIM7 (Trim7) of Mus musculus (Mouse).